Here is a 443-residue protein sequence, read N- to C-terminus: Differentially expressed in FDCP 8 homolog B (443 aa).

Positions 14–49 (HLNPFDKKGGAERHPADSETQPCKDSSTSSPLSVPE) are disordered. Residues 17 to 30 (PFDKKGGAERHPAD) show a composition bias toward basic and acidic residues. Over residues 31-45 (SETQPCKDSSTSSPL) the composition is skewed to polar residues. 2 Phorbol-ester/DAG-type zinc fingers span residues 134-185 (EHRF…TKPC) and 364-424 (IHTT…STSC).

This sequence belongs to the DEF8 family.

Positively regulates lysosome peripheral distribution and ruffled border formation in osteoclasts. Involved in bone resorption. This chain is Differentially expressed in FDCP 8 homolog B (def8-b), found in Xenopus laevis (African clawed frog).